A 238-amino-acid chain; its full sequence is 6-phosphogluconolactonase (238 aa).

The protein belongs to the glucosamine/galactosamine-6-phosphate isomerase family. 6-phosphogluconolactonase subfamily.

It carries out the reaction 6-phospho-D-glucono-1,5-lactone + H2O = 6-phospho-D-gluconate + H(+). It participates in carbohydrate degradation; pentose phosphate pathway; D-ribulose 5-phosphate from D-glucose 6-phosphate (oxidative stage): step 2/3. In terms of biological role, hydrolysis of 6-phosphogluconolactone to 6-phosphogluconate. The polypeptide is 6-phosphogluconolactonase (pgl) (Mesorhizobium japonicum (strain LMG 29417 / CECT 9101 / MAFF 303099) (Mesorhizobium loti (strain MAFF 303099))).